Consider the following 525-residue polypeptide: Matrix extracellular phosphoglycoprotein (525 aa).

The first 17 residues, 1–17, serve as a signal peptide directing secretion; that stretch reads MRVFCVGLLLFSVTWAA. Disordered regions lie at residues 24 to 95, 187 to 216, and 237 to 525; these read TEKT…NRQR, AKAHSKDKKKPQRDSQAQKSPVKSKSTHRI, and EGSG…SDGD. 2 stretches are compositionally biased toward basic and acidic residues: residues 25–46 and 64–73; these read EKTKQSCVEEQRQEEKNKDNIG and IVQERKKDLS. Composition is skewed to polar residues over residues 75–95 and 200–210; these read SEASENKGSSKSQNYFTNRQR and DSQAQKSPVKS. Residues 242–264 form a dentonin region; the sequence is TDLQERGDNDISPFSGDGQPFKD. The Cell attachment site motif lies at 247-249; it reads RGD. S256 is a glycosylation site (O-linked (Xyl...) (chondroitin sulfate) serine). 2 stretches are compositionally biased toward basic and acidic residues: residues 292–312 and 319–328; these read ESTHLDTKKPGYNEIPEREEN and TRDETAKEAD. N-linked (GlcNAc...) asparagine glycans are attached at residues N477 and N478. The segment at 507-525 is ASARM motif; interaction with PHEX; that stretch reads RDDSSESSDSGSSSESDGD. The segment covering 513–525 has biased composition (low complexity); the sequence is SSDSGSSSESDGD.

Belongs to the PF07175/osteoregulin family. In terms of assembly, interacts (via the ASARM motif) with PHEX; the interaction is zinc-dependent. Phosphorylated on serine residues in the ASARM motif (in vitro) by FAM20C; the phosphorylation is important for the inhibition of bone mineralization. In terms of processing, cleaved by CTSB/cathepsin B; the cleavage is blocked by metalloprotease PHEX. Detected in urine (at protein level). Expressed by osteoblasts. Expressed by stem cells in dental pulp. Expressed by mesenchymal cells in dental papilla and dental pulp. Expressed in teeth, specifically in decidious dentin. Expressed in ondotoblasts. Expressed in salivary glands. Secreted from oncogenic hypophosphatemic tumors.

It localises to the secreted. The protein resides in the extracellular space. Its subcellular location is the extracellular matrix. Its function is as follows. Promotes renal phosphate excretion and inhibits intestinal phosphate absorption. Promotes bone mineralization by osteoblasts and cartilage mineralization by chondrocytes. Regulates the mineralization of the extracellular matrix of the craniofacial complex, such as teeth, bone and cartilage. Promotes dental pulp stem cell proliferation and differentiation. The protein is Matrix extracellular phosphoglycoprotein (MEPE) of Homo sapiens (Human).